The chain runs to 403 residues: Zinc finger HIT domain-containing protein 2 (403 aa).

N-acetylmethionine is present on Met-1. 8 residues coordinate Zn(2+): Cys-7, Cys-10, Cys-22, Cys-25, Cys-30, Cys-34, His-38, and Cys-41. The HIT-type zinc-finger motif lies at 7–41 (CGFCPAGEVQPARYTCPRCNAPYCSLRCYRTHGTC). Positions 72–98 (RQQRETEDEPGEAGLSSGPAPGGLSGL) are disordered. At Thr-161 the chain carries Phosphothreonine.

Interacts (via HIT-type zinc finger) with RUVBL2 in the presence of ATP or ADP; shows a stronger interaction in the presence of ADP. Low expression in most tissues; highly expressed in testis.

May act as a bridging factor mediating the interaction between the R2TP/Prefoldin-like (R2TP/PFDL) complex and U5 small nuclear ribonucleoprotein (U5 snRNP). Required for the interaction of R2TP complex subunit RPAP3 and prefoldin-like subunit URI1 with U5 snRNP proteins EFTUD2 and PRPF8. May play a role in regulating the composition of the U5 snRNP complex. This Homo sapiens (Human) protein is Zinc finger HIT domain-containing protein 2 (ZNHIT2).